We begin with the raw amino-acid sequence, 525 residues long: GMP synthase [glutamine-hydrolyzing] (525 aa).

A Glutamine amidotransferase type-1 domain is found at 8–207; that stretch reads KILILDFGSQ…ALDICGCAAN (200 aa). Cysteine 85 functions as the Nucleophile in the catalytic mechanism. Catalysis depends on residues histidine 181 and glutamate 183. The region spanning 208–400 is the GMPS ATP-PPase domain; it reads WKPSSIIEDA…LGLPYNMLYR (193 aa). Position 235 to 241 (235 to 241) interacts with ATP; it reads SGGVDSS.

Homodimer.

The catalysed reaction is XMP + L-glutamine + ATP + H2O = GMP + L-glutamate + AMP + diphosphate + 2 H(+). The protein operates within purine metabolism; GMP biosynthesis; GMP from XMP (L-Gln route): step 1/1. Functionally, catalyzes the synthesis of GMP from XMP. The sequence is that of GMP synthase [glutamine-hydrolyzing] from Shewanella putrefaciens (strain CN-32 / ATCC BAA-453).